The chain runs to 283 residues: Elongation factor Ts (283 aa).

An involved in Mg(2+) ion dislocation from EF-Tu region spans residues 80–83; sequence TDFV.

The protein belongs to the EF-Ts family.

Its subcellular location is the cytoplasm. Its function is as follows. Associates with the EF-Tu.GDP complex and induces the exchange of GDP to GTP. It remains bound to the aminoacyl-tRNA.EF-Tu.GTP complex up to the GTP hydrolysis stage on the ribosome. The polypeptide is Elongation factor Ts (Salmonella paratyphi A (strain ATCC 9150 / SARB42)).